A 155-amino-acid polypeptide reads, in one-letter code: Protein SprT-like (155 aa).

Positions 7 to 145 (QQHMEEVSLQ…GSCGGRLKQT (139 aa)) constitute a SprT-like domain. His-67 provides a ligand contact to Zn(2+). Glu-68 is an active-site residue. His-71 lines the Zn(2+) pocket.

Belongs to the SprT family. Zn(2+) serves as cofactor.

It is found in the cytoplasm. The sequence is that of Protein SprT-like from Listeria innocua serovar 6a (strain ATCC BAA-680 / CLIP 11262).